Here is an 867-residue protein sequence, read N- to C-terminus: Leucine--tRNA ligase (867 aa).

The 'HIGH' region signature appears at 57–67 (PYPSGTLHMGH). Residues 308–327 (SQDERTSDDQPKRGVPTGAV) are disordered. Positions 309–319 (QDERTSDDQPK) are enriched in basic and acidic residues. Residues 631–635 (KMSKS) carry the 'KMSKS' region motif. Position 634 (Lys-634) interacts with ATP.

It belongs to the class-I aminoacyl-tRNA synthetase family.

It is found in the cytoplasm. It carries out the reaction tRNA(Leu) + L-leucine + ATP = L-leucyl-tRNA(Leu) + AMP + diphosphate. This is Leucine--tRNA ligase from Synechococcus sp. (strain CC9311).